A 1034-amino-acid chain; its full sequence is Beta-galactosidase (1034 aa).

Glu-481 (proton donor) is an active-site residue. The active-site Nucleophile is Glu-547.

Belongs to the glycosyl hydrolase 2 family.

It carries out the reaction Hydrolysis of terminal non-reducing beta-D-galactose residues in beta-D-galactosides.. This is Beta-galactosidase (bgaM) from Priestia megaterium (strain DSM 319 / IMG 1521) (Bacillus megaterium).